Here is a 150-residue protein sequence, read N- to C-terminus: Protein E6 (150 aa).

Zinc fingers lie at residues 31–67 (CVFCRKTLSTAEVYAFQYKSLYIVWRGQFPFAACACC) and 104–140 (CYLCHKPLCEVEKLRHILQKARFIKLNSSWKGRCFHC).

Belongs to the papillomaviridae E6 protein family. In terms of assembly, forms homodimers. Interacts with ubiquitin-protein ligase UBE3A/E6-AP; this interaction stimulates UBE3A ubiquitin activity. Interacts with host TP53 and EP300; this interaction inhibits TP53 activity.

It is found in the host cytoplasm. Its subcellular location is the host nucleus. In terms of biological role, plays a major role in the induction and maintenance of cellular transformation. E6 associates with host UBE3A/E6-AP ubiquitin-protein ligase and modulates its activity. Sequesters tumor suppressor TP53 in the host cytoplasm and modulates its activity by interacting with host EP300 that results in the reduction of TP53 acetylation and activation. In turn, apoptosis induced by DNA damage is inhibited. E6 also protects host keratinocytes from apoptosis by mediating the degradation of host BAK1. May also inhibit host immune response. The sequence is that of Protein E6 from Human papillomavirus 13.